The chain runs to 1775 residues: Atrochrysone carboxylic acid synthase (1775 aa).

Residues 29 to 258 (RSQSKTESGW…QLPVYGGLCH (230 aa)) are N-terminal acylcarrier protein transacylase domain (SAT). Residues 391 to 821 (DSSIAIVGMA…GGNTSLLIEE (431 aa)) form the Ketosynthase family 3 (KS3) domain. Active-site for beta-ketoacyl synthase activity residues include cysteine 564, histidine 699, and histidine 740. The interval 921 to 1241 (FVFSGQGSFY…MAQLHNLGVD (321 aa)) is malonyl-CoA:ACP transacylase (MAT) domain. Positions 1305–1626 (TSLVHRLVCE…RSLINTFFSP (322 aa)) are product template (PT) domain. The tract at residues 1309 to 1455 (HRLVCESVQE…WLEEWSPMTH (147 aa)) is N-terminal hotdog fold. The PKS/mFAS DH domain occupies 1309–1621 (HRLVCESVQE…FRTFPRSLIN (313 aa)). Histidine 1341 (proton acceptor; for dehydratase activity) is an active-site residue. A C-terminal hotdog fold region spans residues 1472-1621 (TANRLSRDMV…FRTFPRSLIN (150 aa)). Aspartate 1532 functions as the Proton donor; for dehydratase activity in the catalytic mechanism. The tract at residues 1672-1694 (SRTVMDSSDSSPATTLTPPTLPS) is disordered. Low complexity predominate over residues 1677 to 1689 (DSSDSSPATTLTP). Positions 1698–1775 (STESPIVHRA…DLKAWLIDYC (78 aa)) constitute a Carrier domain. Serine 1735 carries the O-(pantetheine 4'-phosphoryl)serine modification.

Endocrocin is specifically produced in conidia.

It carries out the reaction holo-[ACP] + 8 malonyl-CoA + 8 H(+) = atrochrysone carboxyl-[ACP] + 8 CO2 + 8 CoA + 2 H2O. The protein operates within secondary metabolite biosynthesis. Functionally, non-reducing polyketide synthase; part of the gene cluster that mediates the biosynthesis of endocrocin, a simple anthraquinone interesting for many biotechnological applications. The pathway begins with the synthesis of atrochrysone thioester by the polyketide synthase (PKS) encA. The atrochrysone carboxyl ACP thioesterase encB then breaks the thioester bond and releases the atrochrysone carboxylic acid from encA. The atrochrysone carboxylic acid is then converted to endocrocin anthrone which is further oxidized into endocrocin by the anthrone oxygenase encC. The exact function of encD has not been identified yet, but it negatively regulates endocrocin production, likely through the modification of endocrocin itself. In Aspergillus fumigatus (strain ATCC MYA-4609 / CBS 101355 / FGSC A1100 / Af293) (Neosartorya fumigata), this protein is Atrochrysone carboxylic acid synthase.